The following is a 377-amino-acid chain: Alternative oxidase, mitochondrial (377 aa).

The helical transmembrane segment at 149 to 169 (LSRFIFLESIAAVPGMVAGML) threads the bilayer. Residues Glu-156, Glu-195, and His-198 each contribute to the Fe cation site. The chain crosses the membrane as a helical span at residues 214 to 234 (ILIIGAQGVYFNAMFVAYLIS). Positions 246, 303, and 306 each coordinate Fe cation.

Belongs to the alternative oxidase family. It depends on Fe cation as a cofactor.

It is found in the mitochondrion inner membrane. Functionally, catalyzes cyanide-resistant oxygen consumption. May increase respiration when the cytochrome respiratory pathway is restricted, or in response to low temperatures. The protein is Alternative oxidase, mitochondrial (AOX1) of Pyricularia oryzae (strain 70-15 / ATCC MYA-4617 / FGSC 8958) (Rice blast fungus).